Here is a 497-residue protein sequence, read N- to C-terminus: Glycerol kinase (497 aa).

Position 12 (T12) interacts with ADP. T12, T13, and S14 together coordinate ATP. Residue T12 participates in sn-glycerol 3-phosphate binding. R16 contributes to the ADP binding site. The sn-glycerol 3-phosphate site is built by R82, E83, Y134, and D243. Glycerol-binding residues include R82, E83, Y134, D243, and Q244. Residues T265 and G308 each coordinate ADP. ATP is bound by residues T265, G308, Q312, and G409. G409 and N413 together coordinate ADP.

It belongs to the FGGY kinase family.

The enzyme catalyses glycerol + ATP = sn-glycerol 3-phosphate + ADP + H(+). The protein operates within polyol metabolism; glycerol degradation via glycerol kinase pathway; sn-glycerol 3-phosphate from glycerol: step 1/1. Its activity is regulated as follows. Inhibited by fructose 1,6-bisphosphate (FBP). Its function is as follows. Key enzyme in the regulation of glycerol uptake and metabolism. Catalyzes the phosphorylation of glycerol to yield sn-glycerol 3-phosphate. The protein is Glycerol kinase of Oleidesulfovibrio alaskensis (strain ATCC BAA-1058 / DSM 17464 / G20) (Desulfovibrio alaskensis).